The primary structure comprises 932 residues: Lipoxygenase 2.2, chloroplastic (932 aa).

A PLAT domain is found at 79–219; that stretch reads MKATVSVHMK…CSPDKRTFFP (141 aa). The 710-residue stretch at 223-932 folds into the Lipoxygenase domain; sequence SYIPSQTPKG…EMGIPNSISI (710 aa). Residues 270 to 284 are compositionally biased toward basic and acidic residues; the sequence is PESKRPVLGGKEHPY. Residues 270–311 are disordered; that stretch reads PESKRPVLGGKEHPYPRRCRTGRPRSKTDPSSEEESHKKGEM. The segment covering 285-294 has biased composition (basic residues); sequence PRRCRTGRPR. Basic and acidic residues predominate over residues 295-311; it reads SKTDPSSEEESHKKGEM. Residues H588, H593, H778, N782, and I932 each contribute to the Fe cation site.

This sequence belongs to the lipoxygenase family. Requires Fe cation as cofactor.

It localises to the plastid. It is found in the chloroplast. It catalyses the reaction (9Z,12Z)-octadecadienoate + O2 = (13S)-hydroperoxy-(9Z,11E)-octadecadienoate. The catalysed reaction is (9Z,12Z,15Z)-octadecatrienoate + O2 = (13S)-hydroperoxy-(9Z,11E,15Z)-octadecatrienoate. It participates in lipid metabolism; oxylipin biosynthesis. Plant lipoxygenase may be involved in a number of diverse aspects of plant physiology including growth and development, pest resistance, and senescence or responses to wounding. This enzyme exhibits linoleate 13-lipoxygenase activity. In Hordeum vulgare (Barley), this protein is Lipoxygenase 2.2, chloroplastic (LOX2.2).